The following is a 533-amino-acid chain: NEDD8-activating enzyme E1 regulatory subunit (533 aa).

Residues 330–343 (DMIADSDKFIKLQN) form an interaction with uba3 region.

The protein belongs to the ubiquitin-activating E1 family. ULA1 subfamily. In terms of assembly, heterodimer of uba3 and nae1. The complex binds nedd8 and ube2m.

Its pathway is protein modification; protein neddylation. Its function is as follows. Regulatory subunit of the dimeric uba3-nae1 E1 enzyme. E1 activates nedd8 by first adenylating its C-terminal glycine residue with ATP, thereafter linking this residue to the side chain of the catalytic cysteine, yielding a nedd8-uba3 thioester and free AMP. E1 finally transfers nedd8 to the catalytic cysteine of ube2m. The covalent attachment of nedd8 to target proteins is known as 'neddylation' and the process is involved in the regulation of cell growth, viability and development. This Xenopus laevis (African clawed frog) protein is NEDD8-activating enzyme E1 regulatory subunit (nae1).